Consider the following 186-residue polypeptide: Peptidyl-tRNA hydrolase (186 aa).

A tRNA-binding site is contributed by Tyr-14. His-19 serves as the catalytic Proton acceptor. TRNA-binding residues include Tyr-64, Asn-66, and Asn-113.

Belongs to the PTH family. As to quaternary structure, monomer.

The protein localises to the cytoplasm. The enzyme catalyses an N-acyl-L-alpha-aminoacyl-tRNA + H2O = an N-acyl-L-amino acid + a tRNA + H(+). In terms of biological role, hydrolyzes ribosome-free peptidyl-tRNAs (with 1 or more amino acids incorporated), which drop off the ribosome during protein synthesis, or as a result of ribosome stalling. Functionally, catalyzes the release of premature peptidyl moieties from peptidyl-tRNA molecules trapped in stalled 50S ribosomal subunits, and thus maintains levels of free tRNAs and 50S ribosomes. This chain is Peptidyl-tRNA hydrolase, found in Agathobacter rectalis (strain ATCC 33656 / DSM 3377 / JCM 17463 / KCTC 5835 / VPI 0990) (Eubacterium rectale).